A 114-amino-acid chain; its full sequence is Beta-microseminoprotein (114 aa).

Positions methionine 1 to alanine 20 are cleaved as a signal peptide. Cystine bridges form between cysteine 22–cysteine 70, cysteine 38–cysteine 62, cysteine 57–cysteine 93, cysteine 60–cysteine 69, and cysteine 84–cysteine 107.

The protein belongs to the beta-microseminoprotein family. Homodimer; Interacts with PI16.

It is found in the secreted. The protein is Beta-microseminoprotein (MSMB) of Papio anubis (Olive baboon).